Reading from the N-terminus, the 413-residue chain is MHFINEFINRGYFYQSTDLTRLTQISNSSQIVAYIGFDCTAQSLHVGNLMQIMILRLLQQCGHKSIVVIGGATTKIGDPSEKDKLRRIITNDEIQQNISGIKRSLQKFIKFDETKNDVLLLNNQEWLDSINYINFLRDYGRAFSVNKMLTMNSVKSRLERHTPLSFLEFNYMLLQAYDFYYLNKYYNCNLQIGGSDQWGNITMGVDLVKKLSNNEVFGLTTPLMTNSSGEKMGKTVNGAVWLNEDMCSPYNYFQYWGNIEDNDVIRFAKLYGEFSEIELSKLTELLFNNVNEAKKQIAYKITLLCHGRDEANKALNTAIQMFEHKKADENLPTFTIKDCNNLKVGIPITELLVTIGLAKTKSEGKRLIQGNGIRINNIKVNNINLVVQLQDFIGQVITVSLGKKCHILVKIAK.

Y34 contacts L-tyrosine. The short motif at 39 to 48 is the 'HIGH' region element; it reads CTAQSLHVGN. The L-tyrosine site is built by Y171 and Q175. The 'KMSKS' region signature appears at 231–235; it reads KMGKT. K234 is an ATP binding site. Residues 346-411 form the S4 RNA-binding domain; it reads IPITELLVTI…GKKCHILVKI (66 aa).

The protein belongs to the class-I aminoacyl-tRNA synthetase family. TyrS type 1 subfamily. In terms of assembly, homodimer.

Its subcellular location is the cytoplasm. The enzyme catalyses tRNA(Tyr) + L-tyrosine + ATP = L-tyrosyl-tRNA(Tyr) + AMP + diphosphate + H(+). In terms of biological role, catalyzes the attachment of tyrosine to tRNA(Tyr) in a two-step reaction: tyrosine is first activated by ATP to form Tyr-AMP and then transferred to the acceptor end of tRNA(Tyr). This chain is Tyrosine--tRNA ligase, found in Orientia tsutsugamushi (strain Boryong) (Rickettsia tsutsugamushi).